Here is a 236-residue protein sequence, read N- to C-terminus: Methylosome subunit pICln (236 aa).

Position 2 is an N-acetylserine (S2). S95, S143, S192, S194, S197, and S209 each carry phosphoserine. A disordered region spans residues 134–158 (LHPDPEDEDSDDYDGEEYDVEAHEQ). Residues 138 to 152 (PEDEDSDDYDGEEYD) show a composition bias toward acidic residues. The residue at position 222 (T222) is a Phosphothreonine.

It belongs to the pICln (TC 1.A.47) family. As to quaternary structure, component of the methylosome, a 20S complex containing at least PRMT5/SKB1, WDR77/MEP50 and CLNS1A/pICln. May mediate SNRPD1 and SNRPD3 methylation. Forms a 6S pICln-Sm complex composed of CLNS1A/pICln, SNRPD1, SNRPD2, SNRPE, SNRPF and SNRPG; ring-like structure where CLNS1A/pICln mimics additional Sm proteins and which is unable to assemble into the core snRNP. Interacts with LSM10 and LSM11. Expressed in most tissues.

It is found in the cytoplasm. The protein localises to the cytosol. It localises to the nucleus. Its subcellular location is the cytoskeleton. Functionally, involved in both the assembly of spliceosomal snRNPs and the methylation of Sm proteins. Chaperone that regulates the assembly of spliceosomal U1, U2, U4 and U5 small nuclear ribonucleoproteins (snRNPs), the building blocks of the spliceosome, and thereby plays an important role in the splicing of cellular pre-mRNAs. Most spliceosomal snRNPs contain a common set of Sm proteins SNRPB, SNRPD1, SNRPD2, SNRPD3, SNRPE, SNRPF and SNRPG that assemble in a heptameric protein ring on the Sm site of the small nuclear RNA to form the core snRNP (Sm core). In the cytosol, the Sm proteins SNRPD1, SNRPD2, SNRPE, SNRPF and SNRPG are trapped in an inactive 6S pICln-Sm complex by the chaperone CLNS1A that controls the assembly of the core snRNP. Dissociation by the SMN complex of CLNS1A from the trapped Sm proteins and their transfer to an SMN-Sm complex triggers the assembly of core snRNPs and their transport to the nucleus. This chain is Methylosome subunit pICln (Clns1a), found in Rattus norvegicus (Rat).